Consider the following 968-residue polypeptide: Putative pectinesterase/pectinesterase inhibitor 26 (968 aa).

Residues 33–53 (IGISVAVLVAIIISSTVTIAI) form a helical membrane-spanning segment. The tract at residues 71–230 (LTPAASLKTV…TEFTSNSLAI (160 aa)) is pectinesterase inhibitor 26 A. Asn-101, Asn-158, Asn-219, Asn-295, Asn-352, Asn-400, Asn-464, Asn-541, Asn-559, and Asn-603 each carry an N-linked (GlcNAc...) asparagine glycan. Residues 265-430 (LTPAASLRNV…RKFTSNSLAI (166 aa)) are pectinesterase inhibitor 26 B. The pectinesterase inhibitor 26 C stretch occupies residues 453–614 (PTPSSVLRTV…TEFTSNSLAI (162 aa)). The segment at 660–954 (HVTVAADGSG…FTVKYFLRGD (295 aa)) is pectinesterase 26. Substrate is bound at residue Thr-735. Asn-737 carries an N-linked (GlcNAc...) asparagine glycan. Position 765 (Gln-765) interacts with substrate. Asp-788 acts as the Proton donor; for pectinesterase activity in catalysis. Cys-802 and Cys-822 are joined by a disulfide. Asp-809 serves as the catalytic Nucleophile; for pectinesterase activity. An N-linked (GlcNAc...) asparagine glycan is attached at Asn-863. The substrate site is built by Arg-872 and Trp-874. Asn-900 is a glycosylation site (N-linked (GlcNAc...) asparagine).

This sequence in the N-terminal section; belongs to the PMEI family. The protein in the C-terminal section; belongs to the pectinesterase family. In terms of tissue distribution, expressed in flowers.

Its subcellular location is the membrane. It catalyses the reaction [(1-&gt;4)-alpha-D-galacturonosyl methyl ester](n) + n H2O = [(1-&gt;4)-alpha-D-galacturonosyl](n) + n methanol + n H(+). The protein operates within glycan metabolism; pectin degradation; 2-dehydro-3-deoxy-D-gluconate from pectin: step 1/5. Acts in the modification of cell walls via demethylesterification of cell wall pectin. In Arabidopsis thaliana (Mouse-ear cress), this protein is Putative pectinesterase/pectinesterase inhibitor 26 (PME26).